Here is a 389-residue protein sequence, read N- to C-terminus: 5-hydroxytryptamine receptor 1B (389 aa).

The interval Met-1–Ser-27 is disordered. Topologically, residues Met-1–Leu-45 are extracellular. Positions Gly-15 to Ser-27 are enriched in polar residues. 2 N-linked (GlcNAc...) asparagine glycosylation sites follow: Asn-24 and Asn-31. Residues Pro-46 to Ala-71 traverse the membrane as a helical segment. The Cytoplasmic segment spans residues Thr-72 to Tyr-85. A helical transmembrane segment spans residues Leu-86 to Val-110. Residues Thr-111–Gln-118 are Extracellular-facing. Residues Val-119–Leu-144 traverse the membrane as a helical segment. The cysteines at positions 121 and 198 are disulfide-linked. Positions 128 and 133 each coordinate ergotamine. A DRY motif; important for ligand-induced conformation changes and signaling motif is present at residues Asp-145–Tyr-147. Over Asp-145–Arg-164 the chain is Cytoplasmic. Residues Ala-165–Pro-183 form a helical membrane-spanning segment. At Phe-184–His-204 the chain is on the extracellular side. Val-200 provides a ligand contact to ergotamine. The chain crosses the membrane as a helical span at residues Ile-205–Gly-228. Over Arg-229–Thr-314 the chain is Cytoplasmic. A compositionally biased stretch (polar residues) spans Asp-258–Ser-271. The tract at residues Asp-258 to Gly-281 is disordered. A helical transmembrane segment spans residues Leu-315–Met-336. The Extracellular portion of the chain corresponds to Pro-337 to His-346. The helical transmembrane segment at Leu-347–Thr-369 threads the bilayer. The NPxxY motif; important for ligand-induced conformation changes and signaling motif lies at Asn-364–Tyr-368. The Cytoplasmic segment spans residues Met-370 to Ser-389. Cys-387 is lipidated: S-palmitoyl cysteine.

It belongs to the G-protein coupled receptor 1 family. As to quaternary structure, homodimer. Heterodimer with HTR1D. In terms of processing, phosphorylated. Desensitization of the receptor may be mediated by its phosphorylation. Palmitoylated.

It is found in the cell membrane. Functionally, G-protein coupled receptor for 5-hydroxytryptamine (serotonin). Also functions as a receptor for ergot alkaloid derivatives, various anxiolytic and antidepressant drugs and other psychoactive substances, such as lysergic acid diethylamide (LSD). Ligand binding causes a conformation change that triggers signaling via guanine nucleotide-binding proteins (G proteins) and modulates the activity of downstream effectors, such as adenylate cyclase. HTR1B is coupled to G(i)/G(o) G alpha proteins and mediates inhibitory neurotransmission by inhibiting adenylate cyclase activity. Arrestin family members inhibit signaling via G proteins and mediate activation of alternative signaling pathways. Regulates the release of 5-hydroxytryptamine, dopamine and acetylcholine in the brain, and thereby affects neural activity, nociceptive processing, pain perception, mood and behavior. Besides, plays a role in vasoconstriction of cerebral arteries. The chain is 5-hydroxytryptamine receptor 1B (HTR1B) from Vulpes vulpes (Red fox).